The primary structure comprises 161 residues: Allophycocyanin alpha chain 1 (161 aa).

Residue N71 is modified to N4-methylasparagine. C81 contributes to the (2R,3E)-phycocyanobilin binding site.

Belongs to the phycobiliprotein family. Component of the phycobilisome. Heterodimer of an alpha and a beta chain. Post-translationally, contains one covalently linked bilin chromophore.

It is found in the cellular thylakoid membrane. Light-harvesting photosynthetic bile pigment-protein from the phycobiliprotein complex. Allophycocyanin has a maximum absorption at approximately 650 nanometers. This chain is Allophycocyanin alpha chain 1, found in Microchaete diplosiphon (Fremyella diplosiphon).